The chain runs to 494 residues: UDP-glucose 6-dehydrogenase (494 aa).

NAD(+) contacts are provided by residues 11 to 16 (GAGYVG), aspartate 36, arginine 41, and 89 to 93 (VNTPT). The segment at 88–110 (SVNTPTKTYGMGKGRAADLKYIE) is disordered. At lysine 107 the chain carries N6-acetyllysine. The segment at 129 to 135 (KSTVPVR) is allosteric switch region. NAD(+) is bound at residue 130–132 (STV). Residue glutamate 161 is the Proton donor/acceptor of the active site. Substrate contacts are provided by residues 161–165 (EFLAE), 220–224 (KLTAN), arginine 260, and 267–273 (KASVGFG). Glutamate 165 serves as a coordination point for NAD(+). The active-site Proton donor/acceptor is lysine 220. Catalysis depends on cysteine 276, which acts as the Nucleophile. Residue 276-279 (CFQK) coordinates NAD(+). Positions 321–325 (SLFNT) are important for formation of active hexamer structure. 338-339 (FK) contributes to the substrate binding site. NAD(+) is bound at residue arginine 346. Arginine 442 is a substrate binding site. Residues 466-494 (VSSKRIPYAPSGEIPKFSLQDMPNKKPRV) are disordered. Serine 476 bears the Phosphoserine mark.

Belongs to the UDP-glucose/GDP-mannose dehydrogenase family. As to quaternary structure, homohexamer.

The catalysed reaction is UDP-alpha-D-glucose + 2 NAD(+) + H2O = UDP-alpha-D-glucuronate + 2 NADH + 3 H(+). It functions in the pathway nucleotide-sugar biosynthesis; UDP-alpha-D-glucuronate biosynthesis; UDP-alpha-D-glucuronate from UDP-alpha-D-glucose: step 1/1. Its activity is regulated as follows. UDP-alpha-D-xylose (UDX) acts as a feedback inhibitor. It binds at the same site as the substrate, but functions as allosteric inhibitor by triggering a conformation change that disrupts the active hexameric ring structure and gives rise to an inactive, horseshoe-shaped hexamer. Catalyzes the formation of UDP-alpha-D-glucuronate, a constituent of complex glycosaminoglycans. Required for the biosynthesis of chondroitin sulfate and heparan sulfate. Required for embryonic development via its role in the biosynthesis of glycosaminoglycans. Required for proper brain and neuronal development. The sequence is that of UDP-glucose 6-dehydrogenase (UGDH) from Bos taurus (Bovine).